The chain runs to 102 residues: MNAIPLEHGLAVAGVLFCLGLVGLMVRRNILFVLMSLEIMMNAAALAFVVAGSRWGQPDGQVMFILVISLAAAEASIGLAILMQLYRRFHTLDIDAASEMRG.

3 consecutive transmembrane segments (helical) span residues 6–26, 30–50, and 62–82; these read LEHGLAVAGVLFCLGLVGLMV, ILFVLMSLEIMMNAAALAFVV, and VMFILVISLAAAEASIGLAIL.

This sequence belongs to the complex I subunit 4L family. In terms of assembly, NDH-1 is composed of 13 different subunits. Subunits NuoA, H, J, K, L, M, N constitute the membrane sector of the complex.

Its subcellular location is the cell inner membrane. The enzyme catalyses a quinone + NADH + 5 H(+)(in) = a quinol + NAD(+) + 4 H(+)(out). In terms of biological role, NDH-1 shuttles electrons from NADH, via FMN and iron-sulfur (Fe-S) centers, to quinones in the respiratory chain. The immediate electron acceptor for the enzyme in this species is believed to be ubiquinone. Couples the redox reaction to proton translocation (for every two electrons transferred, four hydrogen ions are translocated across the cytoplasmic membrane), and thus conserves the redox energy in a proton gradient. The polypeptide is NADH-quinone oxidoreductase subunit K (Pseudomonas syringae pv. syringae (strain B728a)).